Consider the following 263-residue polypeptide: Putative hydro-lyase GK2103 (263 aa).

It belongs to the D-glutamate cyclase family.

This is Putative hydro-lyase GK2103 from Geobacillus kaustophilus (strain HTA426).